Here is a 423-residue protein sequence, read N- to C-terminus: Ferrochelatase, mitochondrial (423 aa).

The transit peptide at Met-1–Gln-54 directs the protein to the mitochondrion. Lys-57 carries the N6-acetyllysine modification. Protoporphyrin IX contacts are provided by Arg-115, Tyr-123, and Ser-130. Position 138 is an N6-succinyllysine (Lys-138). Residue Cys-196 coordinates [2Fe-2S] cluster. Residues His-230 and Asp-383 contribute to the active site. Cys-403, Cys-406, and Cys-411 together coordinate [2Fe-2S] cluster. Lys-415 is subject to N6-acetyllysine; alternate. Lys-415 carries the post-translational modification N6-succinyllysine; alternate.

This sequence belongs to the ferrochelatase family. As to quaternary structure, homodimer. Homotetramer. Interacts with PGRMC1; the interaction results in decreased FECH activity. Interacts with ABCB10 and SLC25A37; this interaction forms an oligomeric complex. Forms a complex with ABCB7 and ABCB10, where a dimeric FECH bridges ABCB7 and ABCB10 homodimers; this complex may be required for cellular iron homeostasis, mitochondrial function and heme biosynthesis. Interacts with ABCB7 and ABCB10. [2Fe-2S] cluster serves as cofactor.

Its subcellular location is the mitochondrion inner membrane. The enzyme catalyses heme b + 2 H(+) = protoporphyrin IX + Fe(2+). Its pathway is porphyrin-containing compound metabolism; protoheme biosynthesis; protoheme from protoporphyrin-IX: step 1/1. Its activity is regulated as follows. Inhibited by nitric oxide (NO). The 2Fe-2S cluster could act as a NO sensor. In terms of biological role, catalyzes the ferrous insertion into protoporphyrin IX and participates in the terminal step in the heme biosynthetic pathway. This chain is Ferrochelatase, mitochondrial, found in Homo sapiens (Human).